The sequence spans 874 residues: Alanine--tRNA ligase (874 aa).

Positions 562, 566, 664, and 668 each coordinate Zn(2+).

The protein belongs to the class-II aminoacyl-tRNA synthetase family. Zn(2+) serves as cofactor.

Its subcellular location is the cytoplasm. It catalyses the reaction tRNA(Ala) + L-alanine + ATP = L-alanyl-tRNA(Ala) + AMP + diphosphate. In terms of biological role, catalyzes the attachment of alanine to tRNA(Ala) in a two-step reaction: alanine is first activated by ATP to form Ala-AMP and then transferred to the acceptor end of tRNA(Ala). Also edits incorrectly charged Ser-tRNA(Ala) and Gly-tRNA(Ala) via its editing domain. This chain is Alanine--tRNA ligase, found in Neisseria meningitidis serogroup C / serotype 2a (strain ATCC 700532 / DSM 15464 / FAM18).